The primary structure comprises 95 residues: YcgL domain-containing protein Patl_2802 (95 aa).

The YcgL domain occupies 4 to 88 (LLCAVYKSSK…PEENLLKQHL (85 aa)).

In Pseudoalteromonas atlantica (strain T6c / ATCC BAA-1087), this protein is YcgL domain-containing protein Patl_2802.